Reading from the N-terminus, the 37-residue chain is Large ribosomal subunit protein bL36c (37 aa).

The protein belongs to the bacterial ribosomal protein bL36 family.

The protein resides in the plastid. This Helicosporidium sp. subsp. Simulium jonesii (Green alga) protein is Large ribosomal subunit protein bL36c.